The sequence spans 55 residues: Large ribosomal subunit protein bL33 (55 aa).

This sequence belongs to the bacterial ribosomal protein bL33 family.

This chain is Large ribosomal subunit protein bL33, found in Wigglesworthia glossinidia brevipalpis.